Reading from the N-terminus, the 631-residue chain is Pescadillo homolog (631 aa).

One can recognise a BRCT domain in the interval 321-414; sequence RLRTLFKGLK…QLLPTNDYFL (94 aa). The span at 428 to 442 shows a compositional bias: basic and acidic residues; the sequence is SKRDSYIPPEEKALH. 3 disordered regions span residues 428 to 471, 489 to 561, and 602 to 631; these read SKRD…EADQ, YKKY…VDEH, and ADNK…KLVK. Phosphoserine occurs at positions 453 and 457. 2 stretches are compositionally biased toward acidic residues: residues 453–471 and 498–525; these read SEEE…EADQ and VNED…EDVD. Residues 526 to 538 are compositionally biased toward basic and acidic residues; sequence EQTKRKQQEKEKM. The span at 544–553 shows a compositional bias: basic residues; sequence KVHKVNKRQV. A coiled-coil region spans residues 591–631; the sequence is WLLRKKRRNIDADNKEAKKAAKREARKQAAEAAARAAKLVK. A compositionally biased stretch (basic and acidic residues) spans 602–619; that stretch reads ADNKEAKKAAKREARKQA. A compositionally biased stretch (low complexity) spans 620-631; sequence AEAAARAAKLVK.

The protein belongs to the pescadillo family.

The protein localises to the nucleus. It is found in the nucleolus. It localises to the nucleoplasm. Its function is as follows. Required for maturation of ribosomal RNAs and formation of the large ribosomal subunit. The sequence is that of Pescadillo homolog from Drosophila pseudoobscura pseudoobscura (Fruit fly).